Reading from the N-terminus, the 420-residue chain is Melatonin receptor type 1C (420 aa).

The Extracellular segment spans residues 1-34 (MMEVNSTCLDCRTPGTIRTEQDAQDSASQGLTSA). An N-linked (GlcNAc...) asparagine glycan is attached at Asn-5. Residues 35–55 (LAVVLIFTIVVDVLGNILVIL) traverse the membrane as a helical segment. Residues 56 to 73 (SVLRNKKLQNAGNLFVVS) are Cytoplasmic-facing. A helical transmembrane segment spans residues 74–94 (LSIADLVVAVYPYPVILIAIF). Over 95 to 106 (QNGWTLGNIHCQ) the chain is Extracellular. Cys-105 and Cys-182 are oxidised to a cystine. Residues 107–127 (ISGFLMGLSVIGSVFNITAIA) form a helical membrane-spanning segment. Residues 128–152 (INRYCYICHSLRYDKLYNQRSTWCY) lie on the Cytoplasmic side of the membrane. Residues 153 to 173 (LGLTWILTIIAIVPNFFVGSL) form a helical membrane-spanning segment. At 174–192 (QYDPRIFSCTFAQTVSSSY) the chain is on the extracellular side. A helical membrane pass occupies residues 193-213 (TITVVVVHFIVPLSVVTFCYL). Residues 214-245 (RIWVLVIQVKHRVRQDFKQKLTQTDLRNFLTM) lie on the Cytoplasmic side of the membrane. The chain crosses the membrane as a helical span at residues 246–266 (FVVFVLFAVCWAPLNFIGLAV). Residues 267 to 279 (AINPFHVAPKIPE) are Extracellular-facing. The chain crosses the membrane as a helical span at residues 280–303 (WLFVLSYFMAYFNSCLNAVIYGVL). Residues 304–420 (NQNFRKEYKR…ELCKDGISQR (117 aa)) lie on the Cytoplasmic side of the membrane.

Belongs to the G-protein coupled receptor 1 family. In terms of tissue distribution, moderately expressed in dermal melanophores.

The protein resides in the cell membrane. Functionally, high affinity receptor for melatonin. Likely to mediate the potent effects of melatonin on pigment aggregation in melanophores. The activity of this receptor is mediated by pertussis toxin sensitive G proteins that inhibit adenylate cyclase activity. The protein is Melatonin receptor type 1C (mtnr1c) of Xenopus laevis (African clawed frog).